The primary structure comprises 179 residues: Putative undecaprenyl-phosphate N-acetylgalactosaminyl 1-phosphate transferase (179 aa).

Residues Ile39–Leu59 traverse the membrane as a helical segment.

This sequence belongs to the bacterial sugar transferase family.

It localises to the cell membrane. The catalysed reaction is di-trans,octa-cis-undecaprenyl phosphate + UDP-N-acetyl-alpha-D-galactosamine = N-acetyl-alpha-D-galactosaminyl-di-trans,octa-cis-undecaprenyl diphosphate + UMP. It participates in cell wall biogenesis; teichuronic acid biosynthesis. Its function is as follows. Might mediate the very first reaction in teichuronic synthesis, i.e. the formation of lipid-linked N-acetylglucosamine. The sequence is that of Putative undecaprenyl-phosphate N-acetylgalactosaminyl 1-phosphate transferase (tuaA) from Bacillus subtilis (strain 168).